The sequence spans 251 residues: Triosephosphate isomerase (251 aa).

The substrate site is built by N12 and K14. The active-site Electrophile is H96. Catalysis depends on E168, which acts as the Proton acceptor.

The protein belongs to the triosephosphate isomerase family. Homodimer.

Its subcellular location is the cytoplasm. The protein localises to the glycosome. The enzyme catalyses D-glyceraldehyde 3-phosphate = dihydroxyacetone phosphate. The protein operates within carbohydrate biosynthesis; gluconeogenesis. Its pathway is carbohydrate degradation; glycolysis; D-glyceraldehyde 3-phosphate from glycerone phosphate: step 1/1. This chain is Triosephosphate isomerase, found in Leishmania mexicana.